The chain runs to 261 residues: Intermembrane phospholipid transport system permease protein MlaE (261 aa).

Residues 1–12 (MIVNFISALGKQ) are Cytoplasmic-facing. The chain crosses the membrane as a helical span at residues 13–33 (VIDFFRALGRAGFMLFGALIG). The Periplasmic portion of the chain corresponds to 34-49 (KPQIRKHFPLLVKQMH). Residues 50-70 (VLGVQSLLIILLSGLFIGMVL) form a helical membrane-spanning segment. The Cytoplasmic portion of the chain corresponds to 71–147 (GLQGYVVLID…DPLRRVIAPR (77 aa)). A helical membrane pass occupies residues 148-168 (FWAGVISMPVLSILFIAIGIW). Over 169 to 198 (GGSLVGVDWKGVDSGSFWSVMQNSVSWSYD) the chain is Periplasmic. The helical transmembrane segment at 199–219 (ILNGFIKAVFFAVAVTWIALF) threads the bilayer. Over 220–238 (NGYDCMPTSEGISQATTRT) the chain is Cytoplasmic. Residues 239-259 (VVHASLVVLGLDFILTAIMFG) traverse the membrane as a helical segment. Topologically, residues 260-261 (AG) are periplasmic.

Belongs to the MlaE permease family. The complex is composed of two ATP-binding proteins (MlaF), two transmembrane proteins (MlaE), two cytoplasmic solute-binding proteins (MlaB) and six periplasmic solute-binding proteins (MlaD).

The protein resides in the cell inner membrane. Its function is as follows. Part of the ABC transporter complex MlaFEDB, which is involved in a phospholipid transport pathway that maintains lipid asymmetry in the outer membrane by retrograde trafficking of phospholipids from the outer membrane to the inner membrane. Probably responsible for the translocation of the substrate across the membrane. In Haemophilus influenzae (strain ATCC 51907 / DSM 11121 / KW20 / Rd), this protein is Intermembrane phospholipid transport system permease protein MlaE.